The following is a 716-amino-acid chain: Amino-acid acetyltransferase, mitochondrial (716 aa).

A mitochondrion-targeting transit peptide spans 1–44; the sequence is MSPHTGWPRTVNSSLLKKHRSSLCTCQHTSSFLPRSFSTTADRH. 2 disordered regions span residues 99-119 and 487-508; these read YPKSPDENKPEPEKLATAPTL and LSSSLPMSRRGPTNNGQGTVYP. A compositionally biased stretch (basic and acidic residues) spans 102-112; it reads SPDENKPEPEK. Polar residues predominate over residues 497–508; the sequence is GPTNNGQGTVYP. Residues 537 to 706 enclose the N-acetyltransferase domain; sequence SRPRLKLDDP…YEAVCRSTQP (170 aa).

Belongs to the acetyltransferase family.

The protein resides in the mitochondrion. The catalysed reaction is L-glutamate + acetyl-CoA = N-acetyl-L-glutamate + CoA + H(+). It functions in the pathway amino-acid biosynthesis; L-arginine biosynthesis; N(2)-acetyl-L-ornithine from L-glutamate: step 1/4. Functionally, N-acetylglutamate synthase involved in arginine biosynthesis. This is Amino-acid acetyltransferase, mitochondrial (arg2) from Neosartorya fischeri (strain ATCC 1020 / DSM 3700 / CBS 544.65 / FGSC A1164 / JCM 1740 / NRRL 181 / WB 181) (Aspergillus fischerianus).